The sequence spans 503 residues: E3 ubiquitin-protein ligase IE61 (503 aa).

The RING-type zinc finger occupies 19-58 (CAICMSAISGLGKTLPCLHDFCFVCIQTWTSTSAQCPLCR). Disordered stretches follow at residues 175–194 (AVIT…PSSR), 367–418 (SGPI…LFVD), and 445–503 (AALP…VRRK). Polar residues predominate over residues 375 to 388 (GGSTSQDTSVSNIH). The span at 389–403 (RSPPGGSSTQPSSGR) shows a compositional bias: low complexity. A compositionally biased stretch (basic residues) spans 404 to 414 (RPGRPKGVKRR). Low complexity predominate over residues 471–480 (PSTSGSSPSP).

In terms of assembly, interacts with host BTRC; this interaction seems to inactivate SCF-mediated protein degradation in general.

It carries out the reaction S-ubiquitinyl-[E2 ubiquitin-conjugating enzyme]-L-cysteine + [acceptor protein]-L-lysine = [E2 ubiquitin-conjugating enzyme]-L-cysteine + N(6)-ubiquitinyl-[acceptor protein]-L-lysine.. Functionally, RING-finger E3 ubiquitin ligase that degrades host SP100, one of the major components of ND10 nuclear bodies, thereby disrupting the organization of these bodies. Also plays a role in the inhibition of host NF-kappa-B pathway by blocking the SCF(BTRC)-mediated addition of ubiquitin chains to host IkappaBalpha/NFKBIA, thereby interfering with its degradation. The chain is E3 ubiquitin-protein ligase IE61 from Cercopithecine herpesvirus 9 (strain DHV) (CeHV-9).